A 262-amino-acid chain; its full sequence is Ribosomal RNA small subunit methyltransferase A (262 aa).

S-adenosyl-L-methionine-binding residues include H13, L15, G40, E61, D85, and N103.

Belongs to the class I-like SAM-binding methyltransferase superfamily. rRNA adenine N(6)-methyltransferase family. RsmA subfamily.

The protein localises to the cytoplasm. It carries out the reaction adenosine(1518)/adenosine(1519) in 16S rRNA + 4 S-adenosyl-L-methionine = N(6)-dimethyladenosine(1518)/N(6)-dimethyladenosine(1519) in 16S rRNA + 4 S-adenosyl-L-homocysteine + 4 H(+). Specifically dimethylates two adjacent adenosines (A1518 and A1519) in the loop of a conserved hairpin near the 3'-end of 16S rRNA in the 30S particle. May play a critical role in biogenesis of 30S subunits. This is Ribosomal RNA small subunit methyltransferase A from Bordetella avium (strain 197N).